A 250-amino-acid chain; its full sequence is Ribonuclease HII (250 aa).

The RNase H type-2 domain maps to Q66–K250. Positions 72, 73, and 164 each coordinate a divalent metal cation.

This sequence belongs to the RNase HII family. Requires Mn(2+) as cofactor. Mg(2+) is required as a cofactor.

Its subcellular location is the cytoplasm. It carries out the reaction Endonucleolytic cleavage to 5'-phosphomonoester.. Functionally, endonuclease that specifically degrades the RNA of RNA-DNA hybrids. The polypeptide is Ribonuclease HII (Lactobacillus acidophilus (strain ATCC 700396 / NCK56 / N2 / NCFM)).